Reading from the N-terminus, the 144-residue chain is AP-4 complex subunit sigma-1 (144 aa).

Belongs to the adaptor complexes small subunit family. Adaptor protein complex 4 (AP-4) is a heterotetramer composed of two large adaptins (epsilon-type subunit AP4E1 and beta-type subunit AP4B1), a medium adaptin (mu-type subunit AP4M1) and a small adaptin (sigma-type AP4S1).

The protein resides in the golgi apparatus. It is found in the trans-Golgi network membrane. In terms of biological role, component of the adaptor protein complex 4 (AP-4). Adaptor protein complexes are vesicle coat components involved both in vesicle formation and cargo selection. They control the vesicular transport of proteins in different trafficking pathways. AP-4 forms a non clathrin-associated coat on vesicles departing the trans-Golgi network (TGN) and may be involved in the targeting of proteins from the trans-Golgi network (TGN) to the endosomal-lysosomal system. It is also involved in protein sorting to the basolateral membrane in epithelial cells and the proper asymmetric localization of somatodendritic proteins in neurons. AP-4 is involved in the recognition and binding of tyrosine-based sorting signals found in the cytoplasmic part of cargos, but may also recognize other types of sorting signal. This is AP-4 complex subunit sigma-1 from Mus musculus (Mouse).